Here is a 391-residue protein sequence, read N- to C-terminus: Solute carrier family 35 member F2 (391 aa).

Helical transmembrane passes span 39–59 (MLLS…IRLT), 73–93 (LFQS…TLAV), 108–128 (WWKY…VVKA), 137–157 (IQLL…FFLL), 165–185 (FIGA…DVLM), 200–220 (LIGD…SVCQ), 230–250 (VELL…QLAI), 267–287 (LLYV…PVVI), 294–314 (AINL…LFLF), and 318–338 (FSGL…FYFS). The tract at residues 361–391 (VELPSSGQLEPSVTYTSLSQETEEEPRVRVA) is disordered. The segment covering 365–380 (SSGQLEPSVTYTSLSQ) has biased composition (polar residues).

Belongs to the SLC35F solute transporter family.

The protein resides in the membrane. Putative solute transporter. The sequence is that of Solute carrier family 35 member F2 (slc35f2) from Xenopus tropicalis (Western clawed frog).